We begin with the raw amino-acid sequence, 155 residues long: 6,7-dimethyl-8-ribityllumazine synthase (155 aa).

5-amino-6-(D-ribitylamino)uracil-binding positions include F23, 57 to 59 (AFE), and 81 to 83 (AVI). Residue 86 to 87 (ST) coordinates (2S)-2-hydroxy-3-oxobutyl phosphate. The Proton donor role is filled by H89. Residue F114 participates in 5-amino-6-(D-ribitylamino)uracil binding. R128 lines the (2S)-2-hydroxy-3-oxobutyl phosphate pocket.

This sequence belongs to the DMRL synthase family.

It carries out the reaction (2S)-2-hydroxy-3-oxobutyl phosphate + 5-amino-6-(D-ribitylamino)uracil = 6,7-dimethyl-8-(1-D-ribityl)lumazine + phosphate + 2 H2O + H(+). It participates in cofactor biosynthesis; riboflavin biosynthesis; riboflavin from 2-hydroxy-3-oxobutyl phosphate and 5-amino-6-(D-ribitylamino)uracil: step 1/2. In terms of biological role, catalyzes the formation of 6,7-dimethyl-8-ribityllumazine by condensation of 5-amino-6-(D-ribitylamino)uracil with 3,4-dihydroxy-2-butanone 4-phosphate. This is the penultimate step in the biosynthesis of riboflavin. This is 6,7-dimethyl-8-ribityllumazine synthase from Dehalococcoides mccartyi (strain ATCC BAA-2266 / KCTC 15142 / 195) (Dehalococcoides ethenogenes (strain 195)).